We begin with the raw amino-acid sequence, 220 residues long: Peptide methionine sulfoxide reductase MsrA (220 aa).

Cysteine 59 is an active-site residue.

The protein belongs to the MsrA Met sulfoxide reductase family.

The catalysed reaction is L-methionyl-[protein] + [thioredoxin]-disulfide + H2O = L-methionyl-(S)-S-oxide-[protein] + [thioredoxin]-dithiol. It catalyses the reaction [thioredoxin]-disulfide + L-methionine + H2O = L-methionine (S)-S-oxide + [thioredoxin]-dithiol. Functionally, has an important function as a repair enzyme for proteins that have been inactivated by oxidation. Catalyzes the reversible oxidation-reduction of methionine sulfoxide in proteins to methionine. This chain is Peptide methionine sulfoxide reductase MsrA, found in Corynebacterium kroppenstedtii (strain DSM 44385 / JCM 11950 / CIP 105744 / CCUG 35717).